The following is a 127-amino-acid chain: Glycine cleavage system H protein (127 aa).

The region spanning 22 to 104 (KARIGITHFA…YEKAWMIVVE (83 aa)) is the Lipoyl-binding domain. Position 63 is an N6-lipoyllysine (lysine 63).

Belongs to the GcvH family. As to quaternary structure, the glycine cleavage system is composed of four proteins: P, T, L and H. The cofactor is (R)-lipoate.

The glycine cleavage system catalyzes the degradation of glycine. The H protein shuttles the methylamine group of glycine from the P protein to the T protein. In terms of biological role, is also involved in protein lipoylation via its role as an octanoyl/lipoyl carrier protein intermediate. The polypeptide is Glycine cleavage system H protein (Bacillus velezensis (strain DSM 23117 / BGSC 10A6 / LMG 26770 / FZB42) (Bacillus amyloliquefaciens subsp. plantarum)).